The following is a 235-amino-acid chain: Phosphoribosylaminoimidazole-succinocarboxamide synthase (235 aa).

This sequence belongs to the SAICAR synthetase family.

It catalyses the reaction 5-amino-1-(5-phospho-D-ribosyl)imidazole-4-carboxylate + L-aspartate + ATP = (2S)-2-[5-amino-1-(5-phospho-beta-D-ribosyl)imidazole-4-carboxamido]succinate + ADP + phosphate + 2 H(+). The protein operates within purine metabolism; IMP biosynthesis via de novo pathway; 5-amino-1-(5-phospho-D-ribosyl)imidazole-4-carboxamide from 5-amino-1-(5-phospho-D-ribosyl)imidazole-4-carboxylate: step 1/2. This is Phosphoribosylaminoimidazole-succinocarboxamide synthase from Thermococcus kodakarensis (strain ATCC BAA-918 / JCM 12380 / KOD1) (Pyrococcus kodakaraensis (strain KOD1)).